The chain runs to 436 residues: Flagellum-specific ATP synthase (436 aa).

165 to 172 lines the ATP pocket; it reads SGSGVGKS.

Belongs to the ATPase alpha/beta chains family.

It localises to the cytoplasm. The catalysed reaction is ATP + H2O + 4 H(+)(in) = ADP + phosphate + 5 H(+)(out). In terms of biological role, probable catalytic subunit of a protein translocase for flagellum-specific export, or a proton translocase involved in local circuits at the flagellum. May be involved in a specialized protein export pathway that proceeds without signal peptide cleavage. This Borreliella burgdorferi (strain ATCC 35210 / DSM 4680 / CIP 102532 / B31) (Borrelia burgdorferi) protein is Flagellum-specific ATP synthase (fliI).